Consider the following 491-residue polypeptide: tRNA-2-methylthio-N(6)-dimethylallyladenosine synthase (491 aa).

Residues 3–119 (RSYQIRTYGC…LPTLLERARH (117 aa)) enclose the MTTase N-terminal domain. The [4Fe-4S] cluster site is built by Cys-12, Cys-48, Cys-82, Cys-156, Cys-160, and Cys-163. Residues 142 to 372 (RESAYSGWVS…IELQNQISWD (231 aa)) enclose the Radical SAM core domain. A TRAM domain is found at 375 to 446 (KELVGRSVEL…PHHLVADSEI (72 aa)).

It belongs to the methylthiotransferase family. MiaB subfamily. Monomer. Requires [4Fe-4S] cluster as cofactor.

Its subcellular location is the cytoplasm. The enzyme catalyses N(6)-dimethylallyladenosine(37) in tRNA + (sulfur carrier)-SH + AH2 + 2 S-adenosyl-L-methionine = 2-methylsulfanyl-N(6)-dimethylallyladenosine(37) in tRNA + (sulfur carrier)-H + 5'-deoxyadenosine + L-methionine + A + S-adenosyl-L-homocysteine + 2 H(+). In terms of biological role, catalyzes the methylthiolation of N6-(dimethylallyl)adenosine (i(6)A), leading to the formation of 2-methylthio-N6-(dimethylallyl)adenosine (ms(2)i(6)A) at position 37 in tRNAs that read codons beginning with uridine. The protein is tRNA-2-methylthio-N(6)-dimethylallyladenosine synthase of Saccharopolyspora erythraea (strain ATCC 11635 / DSM 40517 / JCM 4748 / NBRC 13426 / NCIMB 8594 / NRRL 2338).